A 310-amino-acid polypeptide reads, in one-letter code: Homoserine O-acetyltransferase (310 aa).

C142 functions as the Acyl-thioester intermediate in the catalytic mechanism. 2 residues coordinate substrate: K163 and S192. H235 (proton acceptor) is an active-site residue. E237 is a catalytic residue. R249 serves as a coordination point for substrate.

This sequence belongs to the MetA family.

The protein localises to the cytoplasm. The catalysed reaction is L-homoserine + acetyl-CoA = O-acetyl-L-homoserine + CoA. It functions in the pathway amino-acid biosynthesis; L-methionine biosynthesis via de novo pathway; O-acetyl-L-homoserine from L-homoserine: step 1/1. Functionally, transfers an acetyl group from acetyl-CoA to L-homoserine, forming acetyl-L-homoserine. The polypeptide is Homoserine O-acetyltransferase (Lachnospira eligens (strain ATCC 27750 / DSM 3376 / VPI C15-48 / C15-B4) (Eubacterium eligens)).